We begin with the raw amino-acid sequence, 221 residues long: Eukaryotic translation initiation factor 4E-2 (221 aa).

Basic and acidic residues predominate over residues 1-20 (MADELNKAALEEYKSSSVED). The tract at residues 1–36 (MADELNKAALEEYKSSSVEDRGEEGEIVGESDDTAS) is disordered. Positions 21–33 (RGEEGEIVGESDD) are enriched in acidic residues. EIF4G-binding regions lie at residues 46-49 (HPLE) and 56-92 (FDNP…NNIH). MRNA contacts are provided by residues 64–69 (KQAAWG), Lys96, and 114–115 (WE). Cys119 and Cys157 are disulfide-bonded. An EIF4G-binding region spans residues 140-149 (YTLLALIGEQ). MRNA-binding positions include 164–169 (RVRQEK) and 209–213 (KKLDR).

The protein belongs to the eukaryotic initiation factor 4E family. In terms of assembly, EIF4F is a multi-subunit complex, the composition of which varies with external and internal environmental conditions. It is composed of at least EIF4A, EIF4E and EIF4G. EIF4E is also known to interact with other partners. In higher plants two isoforms of EIF4F have been identified, named isoform EIF4F and isoform EIF(iso)4F. Isoform EIF4F has subunits p220 and p26, whereas isoform EIF(iso)4F has subunits p82 and p28. As to quaternary structure, (Microbial infection) Interacts with potyvirus viral genome-linked protein (VPg) in the nucleus; mostly potato virus Y (PVY-LYE84) and tobacco etch virus (TEV-HAT) VPg, but not with PVY-LYE90 and pepper mottle virus (PepMoV) VPg; these interactions are possible in susceptible hosts but impaired in resistant plants. According to the redox status, the Cys-119-Cys-157 disulfide bridge may have a role in regulating protein function by affecting its ability to bind capped mRNA.

It localises to the nucleus. The protein resides in the cytoplasm. Functionally, component of the protein complex eIF4F, which is involved in the recognition of the mRNA cap, ATP-dependent unwinding of 5'-terminal secondary structure and recruitment of mRNA to the ribosome. Recognizes and binds the 7-methylguanosine-containing mRNA cap during an early step in the initiation of protein synthesis and facilitates ribosome binding by inducing the unwinding of the mRNAs secondary structures. Key component of recessive resistance to potyviruses. Its function is as follows. (Microbial infection) Susceptibility host factor required for viral infection (e.g. potato virus Y (PVY) and tobacco etch virus (TEV)) by recruiting viral RNAs to the host ribosomal complex via an interaction with viral genome-linked protein (VPg). This chain is Eukaryotic translation initiation factor 4E-2, found in Solanum lycopersicum (Tomato).